The following is a 511-amino-acid chain: UPF0288 protein MK0796 (511 aa).

The protein belongs to the UPF0288 family.

The sequence is that of UPF0288 protein MK0796 from Methanopyrus kandleri (strain AV19 / DSM 6324 / JCM 9639 / NBRC 100938).